Consider the following 360-residue polypeptide: Alkanal monooxygenase alpha chain (360 aa).

Belongs to the bacterial luciferase oxidoreductase family. As to quaternary structure, heterodimer of an alpha and a beta chain.

The catalysed reaction is a long-chain fatty aldehyde + FMNH2 + O2 = a long-chain fatty acid + hnu + FMN + H2O + 2 H(+). Light-emitting reaction in luminous bacteria. In Photorhabdus luminescens (Xenorhabdus luminescens), this protein is Alkanal monooxygenase alpha chain (luxA).